Consider the following 222-residue polypeptide: Glutathione S-transferase 3 (222 aa).

A GST N-terminal domain is found at 2-83; it reads APLKLYGMPL…YIASKYASEG (82 aa). Glutathione-binding positions include Ser12, 13-14, 41-42, 54-55, and 67-68; these read PN, HK, QI, and ES. Positions 89–219 constitute a GST C-terminal domain; it reads ATASAAKLEV…AAIPLPPPPS (131 aa).

It belongs to the GST superfamily. Phi family. As to quaternary structure, homodimer.

The catalysed reaction is RX + glutathione = an S-substituted glutathione + a halide anion + H(+). Conjugation of reduced glutathione to a wide number of exogenous and endogenous hydrophobic electrophiles. Involved in the detoxification of certain herbicides. The polypeptide is Glutathione S-transferase 3 (Zea mays (Maize)).